We begin with the raw amino-acid sequence, 1039 residues long: uncharacterized protein (1039 aa).

Positions 1–28 (MKLFPRTLLKILVVSFILNFGVTSKSYA) are cleaved as a signal peptide. The next 6 helical transmembrane spans lie at 326 to 346 (IVTA…LLAG), 354 to 374 (YINF…LNIT), 387 to 407 (MIQW…SWVM), 491 to 511 (MLVS…AFMV), 517 to 537 (CMVS…MFLF), and 551 to 571 (MISF…MFSV). The interval 654-680 (KPNQTCDPKAADADTKCNPKPGDSSTS) is disordered. The chain crosses the membrane as a helical span at residues 710-730 (IKDILLALVTACFTLYLMYNF). 3 disordered regions span residues 799 to 875 (LVKG…PTTV), 917 to 949 (IKEA…LDEN), and 1004 to 1039 (LYRS…DENP). The segment covering 802-811 (GSGGGGGSEG) has biased composition (gly residues). Over residues 812–836 (GDSFTSGGLRETSSTAATPSSALSS) the composition is skewed to low complexity. The segment covering 843-861 (GTATPSSASEEMLDTSFSN) has biased composition (polar residues). 2 stretches are compositionally biased toward basic and acidic residues: residues 917–939 (IKEA…HTTE) and 1004–1033 (LYRS…KIDS).

The protein belongs to the TrbL/VirB6 family.

It is found in the cell membrane. This is an uncharacterized protein from Rickettsia bellii (strain RML369-C).